We begin with the raw amino-acid sequence, 359 residues long: GalNAc-alpha-(1-&gt;4)-GalNAc-alpha-(1-&gt;3)-diNAcBac-PP-undecaprenol alpha-1,4-N-acetyl-D-galactosaminyltransferase (359 aa).

Glu-17 provides a ligand contact to substrate. Tyr-45 lines the UDP-N-acetyl-alpha-D-galactosamine pocket. 71–74 contributes to the substrate binding site; it reads RFKK. Residues His-117, Arg-190, Lys-195, Val-246, and 266–274 contribute to the UDP-N-acetyl-alpha-D-galactosamine site; that span reads EGLPTVLIE. Position 190 (Arg-190) interacts with substrate.

This sequence belongs to the glycosyltransferase group 1 family.

Its subcellular location is the cell inner membrane. It carries out the reaction N-acetyl-alpha-D-galactosaminyl-(1-&gt;4)-N-acetyl-alpha-D-galactosaminyl-(1-&gt;3)-N,N'-diacetyl-alpha-D-bacillosaminyl-tri-trans,heptacis-undecaprenyl diphosphate + 3 UDP-N-acetyl-alpha-D-galactosamine = [alpha-D-GalNAc-(1-&gt;4)]4-alpha-D-GalNAc-(1-&gt;3)-alpha-D-diNAcBac-tri-trans,hepta-cis-undecaprenyl diphosphate + 3 UDP + 3 H(+). The protein operates within protein modification; protein glycosylation. Processive glycosyltransferase that is part of the biosynthetic pathway of the lipid-linked oligosaccharide (LLO) that serves as the glycan donor in bacterial protein N-glycosylation. Catalyzes the transfer of exactly three alpha-(1-&gt;4)-N-acetylgalactosamine (GalNAc) units to the growing LLO precursor, GalNAc-alpha-(1-&gt;4)-GalNAc-alpha-(1-&gt;3)-diNAcBac-PP-undecaprenyl. Cannot accept UDP-GlcNAc as substrate. The chain is GalNAc-alpha-(1-&gt;4)-GalNAc-alpha-(1-&gt;3)-diNAcBac-PP-undecaprenol alpha-1,4-N-acetyl-D-galactosaminyltransferase from Campylobacter jejuni subsp. jejuni serotype O:2 (strain ATCC 700819 / NCTC 11168).